A 728-amino-acid chain; its full sequence is Catalase-peroxidase 1 (728 aa).

A cross-link (tryptophyl-tyrosyl-methioninium (Trp-Tyr) (with M-244)) is located at residues 91 to 218; it reads WHSAGTYRTA…LAAVQMGLIY (128 aa). The Proton acceptor role is filled by H92. The segment at residues 218–244 is a cross-link (tryptophyl-tyrosyl-methioninium (Tyr-Met) (with W-91)); it reads YVNPEGPDGNPDPVAAAHDIRETFARM. H259 serves as a coordination point for heme b.

The protein belongs to the peroxidase family. Peroxidase/catalase subfamily. In terms of assembly, homodimer or homotetramer. It depends on heme b as a cofactor. Formation of the three residue Trp-Tyr-Met cross-link is important for the catalase, but not the peroxidase activity of the enzyme.

The catalysed reaction is H2O2 + AH2 = A + 2 H2O. It catalyses the reaction 2 H2O2 = O2 + 2 H2O. Its function is as follows. Bifunctional enzyme with both catalase and broad-spectrum peroxidase activity. This is Catalase-peroxidase 1 from Burkholderia orbicola (strain MC0-3).